The following is a 117-amino-acid chain: Inner kinetochore subunit MHF1 (117 aa).

This sequence belongs to the TAF9 family. CENP-S/MHF1 subfamily. As to quaternary structure, the MHF histone-fold complex is a heterotetramer of 2 MHF1-MHF2 heterodimers. Together with MPH1/FANCM, forms the FANCM-MHF complex. Component of the inner kinetochore constitutive centromere-associated network (CCAN).

DsDNA-binding component of a FANCM-MHF complex involved in DNA damage repair and genome maintenance. FANCM-MHF promotes gene conversion at blocked replication forks, probably by reversal of the stalled fork. Component of the kinetochore, a multiprotein complex that assembles on centromeric DNA and attaches chromosomes to spindle microtubules, mediating chromosome segregation and sister chromatid segregation during meiosis and mitosis. Component of the inner kinetochore constitutive centromere-associated network (CCAN), which serves as a structural platform for outer kinetochore assembly. In Candida albicans (strain SC5314 / ATCC MYA-2876) (Yeast), this protein is Inner kinetochore subunit MHF1.